The chain runs to 237 residues: DNA repair protein RecO (237 aa).

The protein belongs to the RecO family.

Its function is as follows. Involved in DNA repair and RecF pathway recombination. The sequence is that of DNA repair protein RecO from Rickettsia rickettsii (strain Iowa).